Consider the following 439-residue polypeptide: MTIETIKRIIEEENVRFIRLQFTDINGTLKNLEITPDVFLESWEDGIMFDGSSIEGFVRIEESDMYLKPVLDTFAVLPWTVDGAKSARVICDVYTPDGKPFEGDPRYRLRRMMEKAEQLGYTPYAGPEMEFFILPINEKGEPVPEFLDHGGYFDLLPLSKVEEIRRDIAIALEKMGITVEATHHEVAPSQHEVDFRYDTFLRTADNAQTVKLVIKTMAIFHGYHATFMPKPFYGVNGSGMHVHMSLFRGDKNAFYDPDDPLGLSKELRYFVGGILKHAKALAAVTNPTINSYKRLVPGYEAPVYISWSVGNRSALIRIPKARGKATRLEYRSPDPSCNIYLAFAAILAAGLDGIINKIEPPAPVEENIYHMTSERREELNIESLPGSLKEAVEELKKDDVIIDALGEHIFEKFVEAAEKDWKEFSTYVTNWELQRYLYL.

Residues 13–98 (ENVRFIRLQF…VICDVYTPDG (86 aa)) form the GS beta-grasp domain. One can recognise a GS catalytic domain in the interval 105–439 (PRYRLRRMME…NWELQRYLYL (335 aa)). Glu128 and Glu130 together coordinate Mg(2+). Glu180 serves as a coordination point for ATP. Mg(2+) contacts are provided by Glu185 and Glu192. L-glutamate is bound by residues 236–237 (NG) and Gly237. His241 provides a ligand contact to Mg(2+). Residues 243–245 (HMS) and Ser245 each bind ATP. 3 residues coordinate L-glutamate: Arg294, Glu300, and Arg312. Residues Arg312, Arg317, and Lys324 each contribute to the ATP site. Glu329 provides a ligand contact to Mg(2+). Arg331 contacts L-glutamate.

This sequence belongs to the glutamine synthetase family. As to quaternary structure, oligomer of 12 subunits arranged in the form of two hexagons. In its feedback-inhibited form, interacts with TnrA in order to block its DNA-binding activity. Mg(2+) serves as cofactor.

It localises to the cytoplasm. The catalysed reaction is L-glutamate + NH4(+) + ATP = L-glutamine + ADP + phosphate + H(+). With respect to regulation, inhibited by glutamine. Its function is as follows. Glutamine synthetase (GS) is an unusual multitasking protein that functions as an enzyme, a transcription coregulator, and a chaperone in ammonium assimilation and in the regulation of genes involved in nitrogen metabolism. It catalyzes the ATP-dependent biosynthesis of glutamine from glutamate and ammonia. Feedback-inhibited GlnA also interacts with and regulates the activity of the transcriptional regulator TnrA. During nitrogen limitation, TnrA is in its DNA-binding active state and turns on the transcription of genes required for nitrogen assimilation. Under conditions of nitrogen excess, feedback-inhibited GlnA forms a stable complex with TnrA, which inhibits its DNA-binding activity. In contrast, feedback-inhibited GlnA acts as a chaperone to stabilize the DNA-binding activity of GlnR, which represses the transcription of nitrogen assimilation genes. The polypeptide is Glutamine synthetase (Thermotoga maritima (strain ATCC 43589 / DSM 3109 / JCM 10099 / NBRC 100826 / MSB8)).